Reading from the N-terminus, the 896-residue chain is DNA double-strand break repair Rad50 ATPase (896 aa).

ATP-binding positions include 32–38 (NGAGKSS) and Q137. Coiled-coil stretches lie at residues 200-274 (RRYQ…KLQE), 412-505 (EEIR…LISM), 580-611 (IGDIEALRKQKDEVSKKLKDAEDRTHEIESEF), 636-669 (IKLAEDLKRQRETLREKVKDLRSRSAGMDEIQKR), and 702-731 (RSKVETLRSHVSEIEQRISDRERDIERMKK). The region spanning 411-507 (YEEIRRDIDE…KKRQLISMES (97 aa)) is the Zinc-hook domain. 2 residues coordinate Zn(2+): C455 and C458.

It belongs to the SMC family. RAD50 subfamily. In terms of assembly, homodimer. Forms a heterotetramer composed of two Mre11 subunits and two Rad50 subunits. The cofactor is Zn(2+).

In terms of biological role, part of the Rad50/Mre11 complex, which is involved in the early steps of DNA double-strand break (DSB) repair. The complex may facilitate opening of the processed DNA ends to aid in the recruitment of HerA and NurA. Rad50 controls the balance between DNA end bridging and DNA resection via ATP-dependent structural rearrangements of the Rad50/Mre11 complex. This Thermoplasma acidophilum (strain ATCC 25905 / DSM 1728 / JCM 9062 / NBRC 15155 / AMRC-C165) protein is DNA double-strand break repair Rad50 ATPase.